Here is a 427-residue protein sequence, read N- to C-terminus: Four-jointed box protein 1 (427 aa).

Positions 1–18 (MRALSANLFAVLLMCALA) are cleaved as a signal peptide. N-linked (GlcNAc...) asparagine glycosylation is found at Asn-81, Asn-244, and Asn-270.

It is found in the secreted. In terms of biological role, may act as an inhibitor of dendrite extension and branching. The protein is Four-jointed box protein 1 (fjx1) of Xiphophorus maculatus (Southern platyfish).